We begin with the raw amino-acid sequence, 871 residues long: Alanine--tRNA ligase (871 aa).

The Zn(2+) site is built by histidine 559, histidine 563, cysteine 661, and histidine 665.

Belongs to the class-II aminoacyl-tRNA synthetase family. Zn(2+) serves as cofactor.

Its subcellular location is the cytoplasm. It carries out the reaction tRNA(Ala) + L-alanine + ATP = L-alanyl-tRNA(Ala) + AMP + diphosphate. Catalyzes the attachment of alanine to tRNA(Ala) in a two-step reaction: alanine is first activated by ATP to form Ala-AMP and then transferred to the acceptor end of tRNA(Ala). Also edits incorrectly charged Ser-tRNA(Ala) and Gly-tRNA(Ala) via its editing domain. This chain is Alanine--tRNA ligase, found in Aquifex pyrophilus.